Consider the following 62-residue polypeptide: Alpha-conotoxin-like Ca1.1 (62 aa).

An N-terminal signal peptide occupies residues 1 to 21; the sequence is MGMRMMFTVFLLVVLATTVVS. Positions 22–46 are excised as a propeptide; the sequence is FTSDRASDGRNAAANAFDLIALIAR. The residue at position 47 (glutamine 47) is a Pyrrolidone carboxylic acid. 2 disulfides stabilise this stretch: cysteine 49–cysteine 55 and cysteine 50–cysteine 61.

Belongs to the conotoxin A superfamily. In terms of tissue distribution, expressed by the venom duct.

Its subcellular location is the secreted. Alpha-conotoxins act on postsynaptic membranes, they bind to the nicotinic acetylcholine receptors (nAChR) and thus inhibit them. The sequence is that of Alpha-conotoxin-like Ca1.1 from Conus caracteristicus (Characteristic cone).